A 315-amino-acid polypeptide reads, in one-letter code: Probable integrase/recombinase aq_aa09 (315 aa).

Residues 1 to 78 (MEHFIDTYLY…EVRLFYEWLQ (78 aa)) form the Core-binding (CB) domain. Positions 106–313 (SKKKYYSDDE…REKQLEAILE (208 aa)) constitute a Tyr recombinase domain. Active-site residues include R150, K186, H263, R266, and H289. The active-site O-(3'-phospho-DNA)-tyrosine intermediate is the Y299.

The protein belongs to the 'phage' integrase family.

Its function is as follows. May function as an integrase. The chain is Probable integrase/recombinase aq_aa09 from Aquifex aeolicus (strain VF5).